The chain runs to 69 residues: Large ribosomal subunit protein bL31 (69 aa).

Zn(2+) contacts are provided by C16, C18, C37, and C40.

The protein belongs to the bacterial ribosomal protein bL31 family. Type A subfamily. Part of the 50S ribosomal subunit. The cofactor is Zn(2+).

Its function is as follows. Binds the 23S rRNA. In Syntrophotalea carbinolica (strain DSM 2380 / NBRC 103641 / GraBd1) (Pelobacter carbinolicus), this protein is Large ribosomal subunit protein bL31.